The sequence spans 379 residues: Chaperone protein DnaJ (379 aa).

Positions aspartate 5–glycine 70 constitute a J domain. The CR-type zinc-finger motif lies at glycine 139–threonine 217. Zn(2+) is bound by residues cysteine 152, cysteine 155, cysteine 169, cysteine 172, cysteine 191, cysteine 194, cysteine 205, and cysteine 208. CXXCXGXG motif repeat units lie at residues cysteine 152–glycine 159, cysteine 169–glycine 176, cysteine 191–glycine 198, and cysteine 205–glycine 212.

This sequence belongs to the DnaJ family. Homodimer. Requires Zn(2+) as cofactor.

Its subcellular location is the cytoplasm. In terms of biological role, participates actively in the response to hyperosmotic and heat shock by preventing the aggregation of stress-denatured proteins and by disaggregating proteins, also in an autonomous, DnaK-independent fashion. Unfolded proteins bind initially to DnaJ; upon interaction with the DnaJ-bound protein, DnaK hydrolyzes its bound ATP, resulting in the formation of a stable complex. GrpE releases ADP from DnaK; ATP binding to DnaK triggers the release of the substrate protein, thus completing the reaction cycle. Several rounds of ATP-dependent interactions between DnaJ, DnaK and GrpE are required for fully efficient folding. Also involved, together with DnaK and GrpE, in the DNA replication of plasmids through activation of initiation proteins. The polypeptide is Chaperone protein DnaJ (Paraburkholderia phytofirmans (strain DSM 17436 / LMG 22146 / PsJN) (Burkholderia phytofirmans)).